The chain runs to 168 residues: 2-C-methyl-D-erythritol 2,4-cyclodiphosphate synthase (168 aa).

2 residues coordinate a divalent metal cation: Asp13 and His15. 4-CDP-2-C-methyl-D-erythritol 2-phosphate contacts are provided by residues Asp13 to His15 and His39 to Ser40. Residue His47 coordinates a divalent metal cation. 4-CDP-2-C-methyl-D-erythritol 2-phosphate contacts are provided by residues Asp61–Gly63, Phe66–Asp70, Phe144, and Arg147.

This sequence belongs to the IspF family. In terms of assembly, homotrimer. A divalent metal cation serves as cofactor.

It catalyses the reaction 4-CDP-2-C-methyl-D-erythritol 2-phosphate = 2-C-methyl-D-erythritol 2,4-cyclic diphosphate + CMP. It participates in isoprenoid biosynthesis; isopentenyl diphosphate biosynthesis via DXP pathway; isopentenyl diphosphate from 1-deoxy-D-xylulose 5-phosphate: step 4/6. Its function is as follows. Involved in the biosynthesis of isopentenyl diphosphate (IPP) and dimethylallyl diphosphate (DMAPP), two major building blocks of isoprenoid compounds. Catalyzes the conversion of 4-diphosphocytidyl-2-C-methyl-D-erythritol 2-phosphate (CDP-ME2P) to 2-C-methyl-D-erythritol 2,4-cyclodiphosphate (ME-CPP) with a corresponding release of cytidine 5-monophosphate (CMP). The protein is 2-C-methyl-D-erythritol 2,4-cyclodiphosphate synthase of Ralstonia nicotianae (strain ATCC BAA-1114 / GMI1000) (Ralstonia solanacearum).